The sequence spans 512 residues: Putative UDP-glucuronosyltransferase ugt-55 (512 aa).

The signal sequence occupies residues Met1 to Ser22. A helical transmembrane segment spans residues Ile487 to Ile507.

It belongs to the UDP-glycosyltransferase family.

The protein localises to the membrane. It catalyses the reaction glucuronate acceptor + UDP-alpha-D-glucuronate = acceptor beta-D-glucuronoside + UDP + H(+). The protein is Putative UDP-glucuronosyltransferase ugt-55 (ugt-55) of Caenorhabditis elegans.